The following is a 204-amino-acid chain: FMN-dependent NADH:quinone oxidoreductase (204 aa).

Residues Ser-9, 15–17 (SVS), 95–98 (MYNF), and 139–142 (SRGG) each bind FMN.

This sequence belongs to the azoreductase type 1 family. As to quaternary structure, homodimer. Requires FMN as cofactor.

It carries out the reaction 2 a quinone + NADH + H(+) = 2 a 1,4-benzosemiquinone + NAD(+). It catalyses the reaction N,N-dimethyl-1,4-phenylenediamine + anthranilate + 2 NAD(+) = 2-(4-dimethylaminophenyl)diazenylbenzoate + 2 NADH + 2 H(+). Functionally, quinone reductase that provides resistance to thiol-specific stress caused by electrophilic quinones. In terms of biological role, also exhibits azoreductase activity. Catalyzes the reductive cleavage of the azo bond in aromatic azo compounds to the corresponding amines. The polypeptide is FMN-dependent NADH:quinone oxidoreductase (Methylocella silvestris (strain DSM 15510 / CIP 108128 / LMG 27833 / NCIMB 13906 / BL2)).